The following is a 1224-amino-acid chain: Coatomer subunit alpha (1224 aa).

WD repeat units follow at residues 7-37 (TKSA…QLWD), 49-79 (EHDG…KVWN), 91-121 (GHLD…RVWN), and 133-163 (GHNH…RVWD). Position 173 is a phosphoserine (serine 173). Threonine 185 carries the post-translational modification Phosphothreonine. 2 WD repeats span residues 203–233 (GHDR…KIWR) and 247–277 (GHYN…RVWD). Threonine 591 carries the phosphothreonine modification. Arginine 965 bears the Omega-N-methylarginine mark. Serine 1193 bears the Phosphoserine mark.

Oligomeric complex that consists of at least the alpha, beta, beta', gamma, delta, epsilon and zeta subunits. Interacts with SCYL1. Interacts with JAGN1. Interacts with TMEM41B. Interacts with SVEP1. Probably interacts with PEX11A.

It is found in the cytoplasm. The protein resides in the golgi apparatus membrane. The protein localises to the cytoplasmic vesicle. Its subcellular location is the COPI-coated vesicle membrane. It localises to the secreted. In terms of biological role, the coatomer is a cytosolic protein complex that binds to dilysine motifs and reversibly associates with Golgi non-clathrin-coated vesicles, which further mediate biosynthetic protein transport from the ER, via the Golgi up to the trans Golgi network. Coatomer complex is required for budding from Golgi membranes, and is essential for the retrograde Golgi-to-ER transport of dilysine-tagged proteins. In mammals, the coatomer can only be recruited by membranes associated to ADP-ribosylation factors (ARFs), which are small GTP-binding proteins; the complex also influences the Golgi structural integrity, as well as the processing, activity, and endocytic recycling of LDL receptors. Its function is as follows. Xenin stimulates exocrine pancreatic secretion. It inhibits pentagastrin-stimulated secretion of acid, to induce exocrine pancreatic secretion and to affect small and large intestinal motility. In the gut, xenin interacts with the neurotensin receptor. The protein is Coatomer subunit alpha (COPA) of Bos taurus (Bovine).